The primary structure comprises 127 residues: Large ribosomal subunit protein bL21 (127 aa).

The protein belongs to the bacterial ribosomal protein bL21 family. Part of the 50S ribosomal subunit. Contacts protein L20.

Functionally, this protein binds to 23S rRNA in the presence of protein L20. The chain is Large ribosomal subunit protein bL21 from Synechococcus sp. (strain ATCC 27144 / PCC 6301 / SAUG 1402/1) (Anacystis nidulans).